The sequence spans 212 residues: N-(5'-phosphoribosyl)anthranilate isomerase (212 aa).

The protein belongs to the TrpF family.

The enzyme catalyses N-(5-phospho-beta-D-ribosyl)anthranilate = 1-(2-carboxyphenylamino)-1-deoxy-D-ribulose 5-phosphate. Its pathway is amino-acid biosynthesis; L-tryptophan biosynthesis; L-tryptophan from chorismate: step 3/5. The chain is N-(5'-phosphoribosyl)anthranilate isomerase from Microcystis aeruginosa (strain NIES-843 / IAM M-2473).